Consider the following 770-residue polypeptide: MVSAAWLRYPSLLTLGILVSRVAAQYEGDVLRYVDQLVGTANGGHAFPGASLPYGMAKAVADVDGSENYGGFTTEGSNVTGFSHMHDSGTGGKPSMGNFPLVPQICQDDDINKCKFSKEDRAVHYIADSVKARPGYFAIKLNNGIAAEMTVTEHAALYHFDFPHNNAESNGKLPVILVDLTDIQDSRQNAAISLDEDTLRVKANGTFLPSFGIGTYKSFVCVDFSGAEAKDTGIYISNRAGTQPKAISVGRGFNLFYIKAGTYLQFQASSNGPTRVSARVGLSFINEDQACKNAEKEIPGSNWDFEKVRTDAESAWKEKLGLISLKSGGVSDIFQRTFWSAIYRSMISPQDYTGENPLWQSKEPYFDSFYCLLDTYKHQGWLPDCHMSLCKGFTQSGSNADVVIADAYVKSISDNIDWDLAYEAVVKDAEVEPPDWSVEGRGGLMSWKSVGYIPAQDYDYLGTGITTRSISRTVEYSYNDYCVGVLGKGLGKEHEKYFQRSGNWQNLFKADQTSFIDGKDTGFVGFFQPRYYNGTWGYQDPILCSNIAAFCSLTSNSQETYESGIWENQFFVPHDMSTLINLLGGRSKFVARLDYLHDSNILYIGNEPSFLATFLYHYAGRPALSAKRAHTYIPSRFNDTTTGVPGNDDSGAMGSFTVFAMMGLFPNPGQNVYFIMPPFFEAVSIKHPVTGKTATVRNVNFDSKYENVYIQRATLNGKEYTRNWIGHEFFLNGGTLELTLGKEESSWGTGQNDVPPSLGAGIKRDGLRFT.

The signal sequence occupies residues 1–24; that stretch reads MVSAAWLRYPSLLTLGILVSRVAA. N-linked (GlcNAc...) asparagine glycosylation is found at Asn-78, Asn-204, Asn-533, and Asn-638. The interval 746–770 is disordered; the sequence is SWGTGQNDVPPSLGAGIKRDGLRFT.

It belongs to the glycosyl hydrolase 92 family.

It is found in the secreted. This is an uncharacterized protein from Arthroderma benhamiae (strain ATCC MYA-4681 / CBS 112371) (Trichophyton mentagrophytes).